The primary structure comprises 160 residues: Transcription factor 12 (160 aa).

The disordered stretch occupies residues 1 to 58; that stretch reads NKEKDENLHEPPSSDDMKSDDESSQKDIKVSSRGRTSTNEDEDLNPEQKIEREKERRM. Residues 15-30 are compositionally biased toward basic and acidic residues; that stretch reads DDMKSDDESSQKDIKV. A Phosphoserine modification is found at Ser19. Lys29 is covalently cross-linked (Glycyl lysine isopeptide (Lys-Gly) (interchain with G-Cter in SUMO2)). Thr36 carries the phosphothreonine modification. Phosphoserine is present on Ser37. Over residues 46 to 58 the composition is skewed to basic and acidic residues; the sequence is PEQKIEREKERRM. In terms of domain architecture, bHLH spans 55–108; the sequence is ERRMANNARERLRVRDINEAFKELGRMCQLHLKSEKPQTKLLILHQAVAVILSL. Glycyl lysine isopeptide (Lys-Gly) (interchain with G-Cter in SUMO2) cross-links involve residues Lys87 and Lys131. Residues 110–133 form a class A specific domain region; the sequence is QQVRERNLNPKAACLKRREEEKVS. Residues 132 to 160 form a disordered region; it reads VSVVSAEPPTTLPGTHPGLSETTNPMGHM. Positions 139 to 150 are enriched in low complexity; that stretch reads PPTTLPGTHPGL. Residues 151–160 show a composition bias toward polar residues; the sequence is SETTNPMGHM.

As to quaternary structure, efficient DNA binding requires dimerization with another bHLH protein. Forms homo- or heterooligomers with myogenin, E12 and ITF2 proteins. Interacts with PTF1A. Interacts with RUNX1T1. Interacts with NEUROD2. Interacts with BHLHA9.

Its subcellular location is the nucleus. Transcriptional regulator. Involved in the initiation of neuronal differentiation. Activates transcription by binding to the E box (5'-CANNTG-3'). May be involved in the functional network that regulates the development of the GnRH axis. In Papio hamadryas (Hamadryas baboon), this protein is Transcription factor 12 (TCF12).